Here is a 202-residue protein sequence, read N- to C-terminus: Methylthioribulose-1-phosphate dehydratase (202 aa).

The Zn(2+) site is built by H93 and H95.

It belongs to the aldolase class II family. MtnB subfamily. The cofactor is Zn(2+).

It carries out the reaction 5-(methylsulfanyl)-D-ribulose 1-phosphate = 5-methylsulfanyl-2,3-dioxopentyl phosphate + H2O. It participates in amino-acid biosynthesis; L-methionine biosynthesis via salvage pathway; L-methionine from S-methyl-5-thio-alpha-D-ribose 1-phosphate: step 2/6. Catalyzes the dehydration of methylthioribulose-1-phosphate (MTRu-1-P) into 2,3-diketo-5-methylthiopentyl-1-phosphate (DK-MTP-1-P). The polypeptide is Methylthioribulose-1-phosphate dehydratase (Klebsiella pneumoniae (strain 342)).